The primary structure comprises 128 residues: MAVTKEEVVEFISNMTVLELSEFIKELEEKFGVSAAAPAAAMMVAAPAAGGAADAAEEKTEFDVILKEAGANKIGVIKVVRALTSLGLKEAKEKVDGCPSTLKEAVSKEEAEDAKKQLTEAGAVVEVK.

This sequence belongs to the bacterial ribosomal protein bL12 family. As to quaternary structure, homodimer. Part of the ribosomal stalk of the 50S ribosomal subunit. Forms a multimeric L10(L12)X complex, where L10 forms an elongated spine to which 2 to 4 L12 dimers bind in a sequential fashion. Binds GTP-bound translation factors.

Its function is as follows. Forms part of the ribosomal stalk which helps the ribosome interact with GTP-bound translation factors. Is thus essential for accurate translation. This is Large ribosomal subunit protein bL12 from Desulfovibrio desulfuricans (strain ATCC 27774 / DSM 6949 / MB).